Consider the following 429-residue polypeptide: UDP-N-acetylglucosamine 1-carboxyvinyltransferase 2 (429 aa).

Position 22 to 23 (22 to 23 (KN)) interacts with phosphoenolpyruvate. UDP-N-acetyl-alpha-D-glucosamine is bound at residue arginine 93. The active-site Proton donor is cysteine 117. Cysteine 117 carries the post-translational modification 2-(S-cysteinyl)pyruvic acid O-phosphothioketal. UDP-N-acetyl-alpha-D-glucosamine contacts are provided by residues 122-126 (RPIDQ), aspartate 305, and isoleucine 327.

It belongs to the EPSP synthase family. MurA subfamily.

It localises to the cytoplasm. The catalysed reaction is phosphoenolpyruvate + UDP-N-acetyl-alpha-D-glucosamine = UDP-N-acetyl-3-O-(1-carboxyvinyl)-alpha-D-glucosamine + phosphate. The protein operates within cell wall biogenesis; peptidoglycan biosynthesis. Its function is as follows. Cell wall formation. Adds enolpyruvyl to UDP-N-acetylglucosamine. The protein is UDP-N-acetylglucosamine 1-carboxyvinyltransferase 2 of Bacillus anthracis.